An 812-amino-acid polypeptide reads, in one-letter code: Probable inorganic carbon transporter subunit DabA (812 aa).

Positions 337, 339, 499, and 514 each coordinate Zn(2+).

It belongs to the inorganic carbon transporter (TC 9.A.2) DabA family. Forms a complex with DabB. It depends on Zn(2+) as a cofactor.

It localises to the cell inner membrane. Part of an energy-coupled inorganic carbon pump. In Xanthomonas oryzae pv. oryzae (strain MAFF 311018), this protein is Probable inorganic carbon transporter subunit DabA.